A 181-amino-acid chain; its full sequence is MNIAIFGGSFDPPHNAHDAIVKAALLNLKIDKLIIIPTYLNPFKTEFGADPKKRLVWCEALWQNLDKVEISKFEIEQNRAVPSLESVLHFKKIYNPDIVYLIIGADQLINLEKWYKFKVLKKLVNFVVASRDDIEIPSNLQKLNINVKISSTKVRNELDFCQVPKAVLEDVIKFYKEKNAR.

This sequence belongs to the NadD family.

It catalyses the reaction nicotinate beta-D-ribonucleotide + ATP + H(+) = deamido-NAD(+) + diphosphate. It participates in cofactor biosynthesis; NAD(+) biosynthesis; deamido-NAD(+) from nicotinate D-ribonucleotide: step 1/1. Catalyzes the reversible adenylation of nicotinate mononucleotide (NaMN) to nicotinic acid adenine dinucleotide (NaAD). The chain is Probable nicotinate-nucleotide adenylyltransferase from Campylobacter fetus subsp. fetus (strain 82-40).